The chain runs to 173 residues: Nicotinamide-nucleotide adenylyltransferase (173 aa).

Belongs to the archaeal NMN adenylyltransferase family.

It is found in the cytoplasm. It carries out the reaction beta-nicotinamide D-ribonucleotide + ATP + H(+) = diphosphate + NAD(+). It participates in cofactor biosynthesis; NAD(+) biosynthesis; NAD(+) from nicotinamide D-ribonucleotide: step 1/1. The chain is Nicotinamide-nucleotide adenylyltransferase from Methanosarcina acetivorans (strain ATCC 35395 / DSM 2834 / JCM 12185 / C2A).